A 309-amino-acid polypeptide reads, in one-letter code: Aspartate carbamoyltransferase catalytic subunit (309 aa).

R55 and T56 together coordinate carbamoyl phosphate. K85 serves as a coordination point for L-aspartate. Residues R106, H135, and Q138 each contribute to the carbamoyl phosphate site. L-aspartate contacts are provided by R168 and R230. Carbamoyl phosphate is bound by residues L268 and P269.

Belongs to the aspartate/ornithine carbamoyltransferase superfamily. ATCase family. As to quaternary structure, heterododecamer (2C3:3R2) of six catalytic PyrB chains organized as two trimers (C3), and six regulatory PyrI chains organized as three dimers (R2).

It carries out the reaction carbamoyl phosphate + L-aspartate = N-carbamoyl-L-aspartate + phosphate + H(+). It participates in pyrimidine metabolism; UMP biosynthesis via de novo pathway; (S)-dihydroorotate from bicarbonate: step 2/3. Its function is as follows. Catalyzes the condensation of carbamoyl phosphate and aspartate to form carbamoyl aspartate and inorganic phosphate, the committed step in the de novo pyrimidine nucleotide biosynthesis pathway. The protein is Aspartate carbamoyltransferase catalytic subunit of Vibrio vulnificus (strain CMCP6).